The following is a 175-amino-acid chain: NADH-quinone oxidoreductase subunit I (175 aa).

2 consecutive 4Fe-4S ferredoxin-type domains span residues 44-74 (LNRY…VEGA) and 90-119 (RVYQ…MTND). [4Fe-4S] cluster is bound by residues Cys54, Cys57, Cys60, Cys64, Cys99, Cys102, Cys105, and Cys109. Positions 148–175 (PPHAMAPGATDEDYYRGTVSPSAEADAR) are disordered.

This sequence belongs to the complex I 23 kDa subunit family. NDH-1 is composed of 14 different subunits. Subunits NuoA, H, J, K, L, M, N constitute the membrane sector of the complex. It depends on [4Fe-4S] cluster as a cofactor.

It localises to the cell membrane. It catalyses the reaction a quinone + NADH + 5 H(+)(in) = a quinol + NAD(+) + 4 H(+)(out). In terms of biological role, NDH-1 shuttles electrons from NADH, via FMN and iron-sulfur (Fe-S) centers, to quinones in the respiratory chain. The immediate electron acceptor for the enzyme in this species is believed to be menaquinone. Couples the redox reaction to proton translocation (for every two electrons transferred, four hydrogen ions are translocated across the cytoplasmic membrane), and thus conserves the redox energy in a proton gradient. This Mycolicibacterium gilvum (strain PYR-GCK) (Mycobacterium gilvum (strain PYR-GCK)) protein is NADH-quinone oxidoreductase subunit I.